A 465-amino-acid chain; its full sequence is Cysteine--tRNA ligase (465 aa).

Position 29 (C29) interacts with Zn(2+). Positions 31-41 (PTVYNYIHIGN) match the 'HIGH' region motif. Zn(2+) is bound by residues C209, H234, and E238. The 'KMSKS' region motif lies at 266-270 (KMSKS). K269 lines the ATP pocket. Residue S270 is modified to Phosphoserine.

It belongs to the class-I aminoacyl-tRNA synthetase family. As to quaternary structure, monomer. The cofactor is Zn(2+).

Its subcellular location is the cytoplasm. The catalysed reaction is tRNA(Cys) + L-cysteine + ATP = L-cysteinyl-tRNA(Cys) + AMP + diphosphate. This chain is Cysteine--tRNA ligase, found in Bacillus cereus (strain 03BB102).